The following is a 178-amino-acid chain: Large ribosomal subunit protein uL6 (178 aa).

This sequence belongs to the universal ribosomal protein uL6 family. In terms of assembly, part of the 50S ribosomal subunit.

Its function is as follows. This protein binds to the 23S rRNA, and is important in its secondary structure. It is located near the subunit interface in the base of the L7/L12 stalk, and near the tRNA binding site of the peptidyltransferase center. This is Large ribosomal subunit protein uL6 from Campylobacter jejuni subsp. jejuni serotype O:2 (strain ATCC 700819 / NCTC 11168).